Here is a 156-residue protein sequence, read N- to C-terminus: 6,7-dimethyl-8-ribityllumazine synthase (156 aa).

5-amino-6-(D-ribitylamino)uracil-binding positions include Phe-23, 57-59 (AFE), and 81-83 (AVI). Residue 86–87 (ST) coordinates (2S)-2-hydroxy-3-oxobutyl phosphate. His-89 acts as the Proton donor in catalysis. A 5-amino-6-(D-ribitylamino)uracil-binding site is contributed by Phe-114. Arg-128 is a (2S)-2-hydroxy-3-oxobutyl phosphate binding site.

The protein belongs to the DMRL synthase family.

It catalyses the reaction (2S)-2-hydroxy-3-oxobutyl phosphate + 5-amino-6-(D-ribitylamino)uracil = 6,7-dimethyl-8-(1-D-ribityl)lumazine + phosphate + 2 H2O + H(+). The protein operates within cofactor biosynthesis; riboflavin biosynthesis; riboflavin from 2-hydroxy-3-oxobutyl phosphate and 5-amino-6-(D-ribitylamino)uracil: step 1/2. Its function is as follows. Catalyzes the formation of 6,7-dimethyl-8-ribityllumazine by condensation of 5-amino-6-(D-ribitylamino)uracil with 3,4-dihydroxy-2-butanone 4-phosphate. This is the penultimate step in the biosynthesis of riboflavin. The sequence is that of 6,7-dimethyl-8-ribityllumazine synthase from Campylobacter curvus (strain 525.92).